We begin with the raw amino-acid sequence, 67 residues long: Small ribosomal subunit protein bS21 (67 aa).

This sequence belongs to the bacterial ribosomal protein bS21 family.

In Granulibacter bethesdensis (strain ATCC BAA-1260 / CGDNIH1), this protein is Small ribosomal subunit protein bS21.